Here is a 231-residue protein sequence, read N- to C-terminus: Protein OPG061 (231 aa).

This sequence belongs to the orthopoxvirus OPG058 family.

It is found in the host nucleus. The protein resides in the host nucleolus. The protein is Protein OPG061 (OPG061) of Vaccinia virus (strain L-IVP) (VACV).